We begin with the raw amino-acid sequence, 311 residues long: Peptide methionine sulfoxide reductase MsrA/MsrB 2 (311 aa).

Positions 1–155 (MHEIYLAGGC…PNGYCHINVN (155 aa)) are peptide methionine sulfoxide reductase A. Cys-10 is an active-site residue. Residues 172-295 (DEELKKTLSP…NSLSIRFIPK (124 aa)) enclose the MsrB domain. The active-site Nucleophile is the Cys-284.

It in the N-terminal section; belongs to the MsrA Met sulfoxide reductase family. This sequence in the C-terminal section; belongs to the MsrB Met sulfoxide reductase family.

It carries out the reaction L-methionyl-[protein] + [thioredoxin]-disulfide + H2O = L-methionyl-(S)-S-oxide-[protein] + [thioredoxin]-dithiol. It catalyses the reaction [thioredoxin]-disulfide + L-methionine + H2O = L-methionine (S)-S-oxide + [thioredoxin]-dithiol. The enzyme catalyses L-methionyl-[protein] + [thioredoxin]-disulfide + H2O = L-methionyl-(R)-S-oxide-[protein] + [thioredoxin]-dithiol. In terms of biological role, has an important function as a repair enzyme for proteins that have been inactivated by oxidation. Catalyzes the reversible oxidation-reduction of methionine sulfoxide in proteins to methionine. The sequence is that of Peptide methionine sulfoxide reductase MsrA/MsrB 2 (msrAB2) from Streptococcus pneumoniae serotype 4 (strain ATCC BAA-334 / TIGR4).